Reading from the N-terminus, the 732-residue chain is Elongation factor 2 (732 aa).

One can recognise a tr-type G domain in the interval 19–260 (ERIRNIGIAA…MVVRHLPSPI (242 aa)). GTP contacts are provided by residues 28-35 (AHIDHGKT), 94-98 (DTPGH), and 148-151 (NKVD). Histidine 597 carries the post-translational modification Diphthamide.

The protein belongs to the TRAFAC class translation factor GTPase superfamily. Classic translation factor GTPase family. EF-G/EF-2 subfamily.

It is found in the cytoplasm. Catalyzes the GTP-dependent ribosomal translocation step during translation elongation. During this step, the ribosome changes from the pre-translocational (PRE) to the post-translocational (POST) state as the newly formed A-site-bound peptidyl-tRNA and P-site-bound deacylated tRNA move to the P and E sites, respectively. Catalyzes the coordinated movement of the two tRNA molecules, the mRNA and conformational changes in the ribosome. The chain is Elongation factor 2 (fusA) from Pyrococcus furiosus (strain ATCC 43587 / DSM 3638 / JCM 8422 / Vc1).